Reading from the N-terminus, the 269-residue chain is MVMSQGTYTFLTCFAGFWLIWGLIVLLCCFCSFLRRRLKRRQEERLREQNLRALELEPLELEGSLAGSPPGLAPPPPPHRSRLEAPVHAHSHVHVHPLLHHGPAPPHAHPHPHHHALPHPPPPHLAVPPRPWSYPRQAESDMSKPPCYEEAVLMAEPPPPYSEVLTDTRGLYRKIVTPFLSRRDSAEKQEQPPPSYKPLFLDRGYTSALHLPSAPRPAAPCPALCLQAERSRRVFPSWTDSELSSREPLEHGAWRLPVSIPLFGRTTAV.

Residues Met1 to Thr9 are Extracellular-facing. The tract at residues Met1–Glu44 is required for interaction with NMDA receptors. Residues Val2 to Lys39 form a required for membrane localization region. Residues Phe10–Phe30 form a helical; Signal-anchor for type III membrane protein membrane-spanning segment. Residues Cys31–Val269 are Cytoplasmic-facing. Disordered regions lie at residues Gly63–Leu83 and Pro97–Pro121. Ser64 is modified (phosphoserine). Residues Ala108–Leu117 are compositionally biased toward basic residues. Positions Pro146 to Thr166 are required for internalization. The interval Pro146–Val269 is required for apoptosis induction. The short motif at Thr267–Val269 is the PDZ-binding element.

As to quaternary structure, forms a complex with NMDA receptor zeta subunit GRIN1 and epsilon subunit GRIN2B. Interacts with GRIN2B. Interacts with GRIN1; the interaction is reduced upon NMDA receptor activity. Found in a postsynaptic membrane complex with DLG4 and GRIN1. Interacts with DLG4 (via PDZ3 domain and to lesser degree via PDZ2 domain). Interacts with JUN. Found in a complex with JUN and FBXW7. Interacts with JUN and FBXW7; the interaction inhibits ubiquitination-mediated JUN degradation promoting its phosphorylation and transcriptional activity. Interacts with SRC. Palmitoylated. Post-translationally, tyrosine phosphorylated, possibly by SRC. As to expression, highly expressed in brain, moderately expressed in lymph nodes and T cells and low expression in thymus and spleen. Expressed in single positive progenitor thymocytes, particularly in CD8 single positive thymocytes.

It is found in the cell membrane. It localises to the postsynaptic cell membrane. Its subcellular location is the postsynaptic density membrane. The protein localises to the cytoplasm. The protein resides in the perinuclear region. It is found in the synapse. It localises to the cell projection. Its subcellular location is the dendrite. The protein localises to the nucleus. Functionally, acts as a synapse-to-nucleus messenger to promote NMDA receptor-mediated excitotoxicity in neurons in a JUN-dependent manner. Inhibits ubiquitination-mediated degradation and promotes phosphorylation and transcriptional activity of transcription factor JUN. Might play a redundant role in the regulation of T cell receptor signaling. Might promote apoptosis in T cells. This is Proline-rich protein 7 (Prr7) from Mus musculus (Mouse).